The primary structure comprises 125 residues: Probable 4-amino-4-deoxy-L-arabinose-phosphoundecaprenol flippase subunit ArnF (125 aa).

Residues 1 to 2 (MG) lie on the Cytoplasmic side of the membrane. A helical membrane pass occupies residues 3–23 (VMWGLISVAIASLAQLSLGFA). Over 24 to 33 (MMRLPSIAHP) the chain is Periplasmic. The helical transmembrane segment at 34–54 (LAFISGLGALNAATLALFAGL) threads the bilayer. At 55–76 (AGYLVSVFCWHKTLHTLALSKA) the chain is on the cytoplasmic side. The helical transmembrane segment at 77–97 (YALLSLSYVLVWVASMLLPGL) threads the bilayer. Residues 98-100 (QGA) lie on the Periplasmic side of the membrane. The chain crosses the membrane as a helical span at residues 101 to 121 (FSLKAMLGVLCIMAGVMLIFL). The Cytoplasmic segment spans residues 122–125 (PARS).

This sequence belongs to the ArnF family. In terms of assembly, heterodimer of ArnE and ArnF.

The protein localises to the cell inner membrane. Its pathway is bacterial outer membrane biogenesis; lipopolysaccharide biosynthesis. In terms of biological role, translocates 4-amino-4-deoxy-L-arabinose-phosphoundecaprenol (alpha-L-Ara4N-phosphoundecaprenol) from the cytoplasmic to the periplasmic side of the inner membrane. The protein is Probable 4-amino-4-deoxy-L-arabinose-phosphoundecaprenol flippase subunit ArnF of Salmonella agona (strain SL483).